Consider the following 233-residue polypeptide: Large ribosomal subunit protein uL1 (233 aa).

This sequence belongs to the universal ribosomal protein uL1 family. Part of the 50S ribosomal subunit.

Its function is as follows. Binds directly to 23S rRNA. The L1 stalk is quite mobile in the ribosome, and is involved in E site tRNA release. Functionally, protein L1 is also a translational repressor protein, it controls the translation of the L11 operon by binding to its mRNA. The polypeptide is Large ribosomal subunit protein uL1 (Rhizobium johnstonii (strain DSM 114642 / LMG 32736 / 3841) (Rhizobium leguminosarum bv. viciae)).